Reading from the N-terminus, the 459-residue chain is MSCPRLVIAGTSSGAGKTSLTLGLTAALRRRGLKVQTFKVGPDFLDPTWLSLASERPCINLDGWMCGERYVRDRFATATADADIAIVEGVMGLFDGADPAAAAGSTAEIARWLDAPVLLVVNAHGMARSLAALVKGYAEFDPDLHLAGVIANRCGSTRHGDWLSEALCAAGMPPLTGTVIRDSLPPLPSRHLGLVTADRQHLTSEALNTLADAVERQLDMPRILDLAEKVPATPGVAATASSTEGRPVRIGMAFDEAFHFYYPDNLQALEDAGATLVRFSPMHDDTLPADLDALLLGGGYPEEYADTLETNQTMRQAVADFAAADRPIYAECGGLMYLSEGIELRDGSRHAMTGALPFATRMLATRKRLGYAEVRHLAHGPFGPAGTCLRGHEFHYSEAIAEPAAPGWQSAWQVSYRRSNKPVAEGYQRGRLFASYVHTHFASRPGAARAFVDFCRGES.

In terms of domain architecture, GATase cobBQ-type spans 249 to 446 (RIGMAFDEAF…VHTHFASRPG (198 aa)). The Nucleophile role is filled by Cys-332.

It belongs to the CobB/CbiA family. The cofactor is Mg(2+).

The catalysed reaction is cob(II)yrinate + 2 L-glutamine + 2 ATP + 2 H2O = cob(II)yrinate a,c diamide + 2 L-glutamate + 2 ADP + 2 phosphate + 2 H(+). Its pathway is cofactor biosynthesis; adenosylcobalamin biosynthesis; cob(II)yrinate a,c-diamide from sirohydrochlorin (anaerobic route): step 10/10. Catalyzes the ATP-dependent amidation of the two carboxylate groups at positions a and c of cobyrinate, using either L-glutamine or ammonia as the nitrogen source. The chain is Cobyrinate a,c-diamide synthase from Syntrophotalea carbinolica (strain DSM 2380 / NBRC 103641 / GraBd1) (Pelobacter carbinolicus).